A 360-amino-acid chain; its full sequence is UDP-N-acetylglucosamine--N-acetylmuramyl-(pentapeptide) pyrophosphoryl-undecaprenol N-acetylglucosamine transferase (360 aa).

Positions 198 and 289 each coordinate UDP-N-acetyl-alpha-D-glucosamine.

This sequence belongs to the glycosyltransferase 28 family. MurG subfamily.

Its subcellular location is the cell membrane. It carries out the reaction Mur2Ac(oyl-L-Ala-gamma-D-Glu-L-Lys-D-Ala-D-Ala)-di-trans,octa-cis-undecaprenyl diphosphate + UDP-N-acetyl-alpha-D-glucosamine = beta-D-GlcNAc-(1-&gt;4)-Mur2Ac(oyl-L-Ala-gamma-D-Glu-L-Lys-D-Ala-D-Ala)-di-trans,octa-cis-undecaprenyl diphosphate + UDP + H(+). The protein operates within cell wall biogenesis; peptidoglycan biosynthesis. Functionally, cell wall formation. Catalyzes the transfer of a GlcNAc subunit on undecaprenyl-pyrophosphoryl-MurNAc-pentapeptide (lipid intermediate I) to form undecaprenyl-pyrophosphoryl-MurNAc-(pentapeptide)GlcNAc (lipid intermediate II). The sequence is that of UDP-N-acetylglucosamine--N-acetylmuramyl-(pentapeptide) pyrophosphoryl-undecaprenol N-acetylglucosamine transferase from Streptococcus pyogenes serotype M12 (strain MGAS2096).